A 234-amino-acid chain; its full sequence is Orotate phosphoribosyltransferase (234 aa).

Lysine 37 is a binding site for 5-phospho-alpha-D-ribose 1-diphosphate. 45–46 serves as a coordination point for orotate; the sequence is FF. 5-phospho-alpha-D-ribose 1-diphosphate contacts are provided by residues 83 to 84, arginine 109, lysine 110, lysine 113, histidine 115, and 134 to 142; these read YK and DDVISAGTS. Orotate is bound by residues serine 138 and arginine 166.

Belongs to the purine/pyrimidine phosphoribosyltransferase family. PyrE subfamily. As to quaternary structure, homodimer. Mg(2+) serves as cofactor.

The catalysed reaction is orotidine 5'-phosphate + diphosphate = orotate + 5-phospho-alpha-D-ribose 1-diphosphate. It participates in pyrimidine metabolism; UMP biosynthesis via de novo pathway; UMP from orotate: step 1/2. In terms of biological role, catalyzes the transfer of a ribosyl phosphate group from 5-phosphoribose 1-diphosphate to orotate, leading to the formation of orotidine monophosphate (OMP). The sequence is that of Orotate phosphoribosyltransferase from Methylibium petroleiphilum (strain ATCC BAA-1232 / LMG 22953 / PM1).